The sequence spans 542 residues: CTP synthase (542 aa).

An amidoligase domain region spans residues 1–265 (MARYVFITGG…DNEVLAAFGI (265 aa)). A CTP-binding site is contributed by Ser13. Ser13 is a binding site for UTP. Residues 14–19 (SLGKGI) and Asp71 each bind ATP. Mg(2+)-binding residues include Asp71 and Glu139. CTP-binding positions include 146–148 (DIE), 186–191 (KTKPTQ), and Lys222. UTP-binding positions include 186 to 191 (KTKPTQ) and Lys222. In terms of domain architecture, Glutamine amidotransferase type-1 spans 291 to 541 (TIAIVGKYTG…IEAALEQSRL (251 aa)). Gly353 contacts L-glutamine. The active-site Nucleophile; for glutamine hydrolysis is the Cys380. Residues 381 to 384 (FGMQ), Glu404, and Arg469 contribute to the L-glutamine site. Residues His514 and Glu516 contribute to the active site.

Belongs to the CTP synthase family. Homotetramer.

The enzyme catalyses UTP + L-glutamine + ATP + H2O = CTP + L-glutamate + ADP + phosphate + 2 H(+). It carries out the reaction L-glutamine + H2O = L-glutamate + NH4(+). The catalysed reaction is UTP + NH4(+) + ATP = CTP + ADP + phosphate + 2 H(+). Its pathway is pyrimidine metabolism; CTP biosynthesis via de novo pathway; CTP from UDP: step 2/2. Allosterically activated by GTP, when glutamine is the substrate; GTP has no effect on the reaction when ammonia is the substrate. The allosteric effector GTP functions by stabilizing the protein conformation that binds the tetrahedral intermediate(s) formed during glutamine hydrolysis. Inhibited by the product CTP, via allosteric rather than competitive inhibition. Catalyzes the ATP-dependent amination of UTP to CTP with either L-glutamine or ammonia as the source of nitrogen. Regulates intracellular CTP levels through interactions with the four ribonucleotide triphosphates. This chain is CTP synthase, found in Sinorhizobium medicae (strain WSM419) (Ensifer medicae).